A 325-amino-acid chain; its full sequence is Anthranilate phosphoribosyltransferase (325 aa).

Residues Gly-73, 76–77 (GD), Thr-81, 83–86 (NIST), 100–108 (KHGNVSITS), and Ser-112 each bind 5-phospho-alpha-D-ribose 1-diphosphate. Residue Gly-73 participates in anthranilate binding. Ser-85 lines the Mg(2+) pocket. Residue Asn-103 coordinates anthranilate. Arg-158 contributes to the anthranilate binding site. Asp-216 and Glu-217 together coordinate Mg(2+).

This sequence belongs to the anthranilate phosphoribosyltransferase family. In terms of assembly, homodimer. Mg(2+) is required as a cofactor.

It catalyses the reaction N-(5-phospho-beta-D-ribosyl)anthranilate + diphosphate = 5-phospho-alpha-D-ribose 1-diphosphate + anthranilate. It functions in the pathway amino-acid biosynthesis; L-tryptophan biosynthesis; L-tryptophan from chorismate: step 2/5. Its function is as follows. Catalyzes the transfer of the phosphoribosyl group of 5-phosphorylribose-1-pyrophosphate (PRPP) to anthranilate to yield N-(5'-phosphoribosyl)-anthranilate (PRA). In Methanococcus aeolicus (strain ATCC BAA-1280 / DSM 17508 / OCM 812 / Nankai-3), this protein is Anthranilate phosphoribosyltransferase.